The following is a 131-amino-acid chain: Large ribosomal subunit protein bL17 (131 aa).

This sequence belongs to the bacterial ribosomal protein bL17 family. As to quaternary structure, part of the 50S ribosomal subunit. Contacts protein L32.

The polypeptide is Large ribosomal subunit protein bL17 (Cupriavidus metallidurans (strain ATCC 43123 / DSM 2839 / NBRC 102507 / CH34) (Ralstonia metallidurans)).